Reading from the N-terminus, the 102-residue chain is uncharacterized protein (102 aa).

The first 22 residues, 1-22 (MKFKYGATLFSGFLGLSAILAA), serve as a signal peptide directing secretion. Cysteine 23 carries the N-palmitoyl cysteine lipid modification. Cysteine 23 carries the S-diacylglycerol cysteine lipid modification.

It belongs to the MG185/MG260 family.

The protein resides in the cell membrane. This is an uncharacterized protein from Mycoplasma pneumoniae (strain ATCC 29342 / M129 / Subtype 1) (Mycoplasmoides pneumoniae).